The primary structure comprises 109 residues: Large ribosomal subunit protein eL30 (109 aa).

Belongs to the eukaryotic ribosomal protein eL30 family. Component of the large ribosomal subunit (LSU). Mature N.crassa ribosomes consist of a small (40S) and a large (60S) subunit. The 40S small subunit contains 1 molecule of ribosomal RNA (18S rRNA) and at least 32 different proteins. The large 60S subunit contains 3 rRNA molecules (26S, 5.8S and 5S rRNA) and at least 42 different proteins.

It localises to the cytoplasm. Component of the ribosome, a large ribonucleoprotein complex responsible for the synthesis of proteins in the cell. The small ribosomal subunit (SSU) binds messenger RNAs (mRNAs) and translates the encoded message by selecting cognate aminoacyl-transfer RNA (tRNA) molecules. The large subunit (LSU) contains the ribosomal catalytic site termed the peptidyl transferase center (PTC), which catalyzes the formation of peptide bonds, thereby polymerizing the amino acids delivered by tRNAs into a polypeptide chain. The nascent polypeptides leave the ribosome through a tunnel in the LSU and interact with protein factors that function in enzymatic processing, targeting, and the membrane insertion of nascent chains at the exit of the ribosomal tunnel. In Neurospora crassa (strain ATCC 24698 / 74-OR23-1A / CBS 708.71 / DSM 1257 / FGSC 987), this protein is Large ribosomal subunit protein eL30 (rpl-30).